Consider the following 276-residue polypeptide: NAD-capped RNA hydrolase NudC (276 aa).

Position 82 (R82) interacts with substrate. Zn(2+) is bound by residues C112 and C115. Residue E125 coordinates substrate. Residues C130 and C133 each coordinate Zn(2+). Y138 serves as a coordination point for substrate. The Nudix hydrolase domain maps to 139 to 262 (PRLSPSMIVL…SIARYLIELY (124 aa)). Residues A172, E188, and E192 each contribute to the a divalent metal cation site. Residues 173–194 (GYVEPGESVEQCVAREVREEVG) carry the Nudix box motif. 206-213 (QGWPFPHS) lines the substrate pocket. A divalent metal cation is bound at residue E233. Residue A255 participates in substrate binding.

It belongs to the Nudix hydrolase family. NudC subfamily. As to quaternary structure, homodimer. Requires Mg(2+) as cofactor. The cofactor is Mn(2+). It depends on Zn(2+) as a cofactor.

It catalyses the reaction a 5'-end NAD(+)-phospho-ribonucleoside in mRNA + H2O = a 5'-end phospho-adenosine-phospho-ribonucleoside in mRNA + beta-nicotinamide D-ribonucleotide + 2 H(+). The enzyme catalyses NAD(+) + H2O = beta-nicotinamide D-ribonucleotide + AMP + 2 H(+). It carries out the reaction NADH + H2O = reduced beta-nicotinamide D-ribonucleotide + AMP + 2 H(+). Its function is as follows. mRNA decapping enzyme that specifically removes the nicotinamide adenine dinucleotide (NAD) cap from a subset of mRNAs by hydrolyzing the diphosphate linkage to produce nicotinamide mononucleotide (NMN) and 5' monophosphate mRNA. The NAD-cap is present at the 5'-end of some mRNAs and stabilizes RNA against 5'-processing. Has preference for mRNAs with a 5'-end purine. Catalyzes the hydrolysis of a broad range of dinucleotide pyrophosphates. In Stutzerimonas stutzeri (strain A1501) (Pseudomonas stutzeri), this protein is NAD-capped RNA hydrolase NudC.